A 254-amino-acid polypeptide reads, in one-letter code: Nickel import ATP-binding protein NikD (254 aa).

Positions 2–241 (PQQIELRNIA…PKHTVTRSLV (240 aa)) constitute an ABC transporter domain. 36–43 (GGSGSGKS) serves as a coordination point for ATP.

The protein belongs to the ABC transporter superfamily. Nickel importer (TC 3.A.1.5.3) family. The complex is composed of two ATP-binding proteins (NikD and NikE), two transmembrane proteins (NikB and NikC) and a solute-binding protein (NikA).

It is found in the cell inner membrane. The enzyme catalyses Ni(2+)(out) + ATP + H2O = Ni(2+)(in) + ADP + phosphate + H(+). In terms of biological role, part of the ABC transporter complex NikABCDE involved in nickel import. Responsible for energy coupling to the transport system. This Shigella flexneri serotype 5b (strain 8401) protein is Nickel import ATP-binding protein NikD.